Here is a 188-residue protein sequence, read N- to C-terminus: MTVANSASISADIAGRYAQALFDLVRDSGGIDALSSQIDDLASAYDASQDLRDLTLSPLYDRQQQEAAVGALSERMGLSAELANTLRLLARNRRLFTLPQFVAKLRNLIADAKGEVTADVVSAQALTDEQKARLADTLAAKSGKTVKLNARVDESLIGGMIVKLGSQMIDSSIRSKLASLQNAMKEVG.

It belongs to the ATPase delta chain family. In terms of assembly, F-type ATPases have 2 components, F(1) - the catalytic core - and F(0) - the membrane proton channel. F(1) has five subunits: alpha(3), beta(3), gamma(1), delta(1), epsilon(1). F(0) has three main subunits: a(1), b(2) and c(10-14). The alpha and beta chains form an alternating ring which encloses part of the gamma chain. F(1) is attached to F(0) by a central stalk formed by the gamma and epsilon chains, while a peripheral stalk is formed by the delta and b chains.

The protein localises to the cell inner membrane. In terms of biological role, f(1)F(0) ATP synthase produces ATP from ADP in the presence of a proton or sodium gradient. F-type ATPases consist of two structural domains, F(1) containing the extramembraneous catalytic core and F(0) containing the membrane proton channel, linked together by a central stalk and a peripheral stalk. During catalysis, ATP synthesis in the catalytic domain of F(1) is coupled via a rotary mechanism of the central stalk subunits to proton translocation. Functionally, this protein is part of the stalk that links CF(0) to CF(1). It either transmits conformational changes from CF(0) to CF(1) or is implicated in proton conduction. The polypeptide is ATP synthase subunit delta (Paracoccus denitrificans (strain Pd 1222)).